Reading from the N-terminus, the 241-residue chain is Phycocyanobilin:ferredoxin oxidoreductase (241 aa).

It belongs to the HY2 family.

The catalysed reaction is (2R,3Z)-phycocyanobilin + 4 oxidized [2Fe-2S]-[ferredoxin] = biliverdin IXalpha + 4 reduced [2Fe-2S]-[ferredoxin] + 4 H(+). Its function is as follows. Catalyzes the four-electron reduction of biliverdin IX-alpha (2-electron reduction at both the A and D rings); the reaction proceeds via an isolatable 2-electron intermediate, 181,182-dihydrobiliverdin. In Prochlorococcus marinus (strain MIT 9312), this protein is Phycocyanobilin:ferredoxin oxidoreductase.